The sequence spans 348 residues: MSESEVRQTEVIPQWKREEVDELVDFIESYESVGVVGVAGIPSRQLQSMRRELHGSAAVRMSRNTLVNRALDEVNDGFEELKEYIAGQVALIGTNDNPFALFKELEASKTPAPINAGEVAPNDIVIPEGDTGVDPGPFVGELQQVGASARIMDGSIMVTEDSNVLSEGEEVSEELANVLAELGIEPKEVGLDLRGVFSEGVLFEPDELAIDVDEYRADIQSAVSAATNLSVNAVYPTAQTAPTLIAKATSEAKAVGLFANIESPDFMPELISKADAQLRALAANIDDEEALPEELRGVSAADTGAAEEEESTDEEAADADQADAAEDDDAADDDGDDEDAGDALGSLF.

Positions 291–348 are disordered; the sequence is LPEELRGVSAADTGAAEEEESTDEEAADADQADAAEDDDAADDDGDDEDAGDALGSLF. Positions 305 to 341 are enriched in acidic residues; the sequence is AAEEEESTDEEAADADQADAAEDDDAADDDGDDEDAG.

The protein belongs to the universal ribosomal protein uL10 family. In terms of assembly, part of the 50S ribosomal subunit. Forms part of the ribosomal stalk which helps the ribosome interact with GTP-bound translation factors. Forms a heptameric L10(L12)2(L12)2(L12)2 complex, where L10 forms an elongated spine to which the L12 dimers bind in a sequential fashion.

In terms of biological role, forms part of the ribosomal stalk, playing a central role in the interaction of the ribosome with GTP-bound translation factors. The chain is Large ribosomal subunit protein uL10 from Haloferax volcanii (strain ATCC 29605 / DSM 3757 / JCM 8879 / NBRC 14742 / NCIMB 2012 / VKM B-1768 / DS2) (Halobacterium volcanii).